Reading from the N-terminus, the 396-residue chain is Fumarate--(S)-2,3-diaminopropanoate ligase (396 aa).

It carries out the reaction (S)-2,3-diaminopropanoate + fumarate + ATP = N(3)-fumaroyl-(S)-2,3-diaminopropanoate + AMP + diphosphate. The protein operates within antibiotic biosynthesis. In terms of biological role, involved in dapdiamide antibiotics biosynthesis. Ligates fumarate and 2,3-diaminopropionate (DAP) to form N-beta-fumaroyl-DAP. Can also form N-succinoyl-DAP from succinate and DAP, with lower efficiency. The polypeptide is Fumarate--(S)-2,3-diaminopropanoate ligase (Enterobacter agglomerans (Erwinia herbicola)).